We begin with the raw amino-acid sequence, 761 residues long: MRYNQFSYIPTKPNEAFEELKGLGFPLNKKNSDKANLEAFLRHSFLNQTDTDYALSLLIVDAKTDALTFFKSNSDLTLENLQWIYLQLLGFVPFVDFKDPKAFLQDINFPVSYDNIFQSLHHLLACRGKSGNTLIDQLVADGLLHADNHYHFFNGKSLATFNTNQLIREVVYVETSLDTMSSGEHDLVKVNIIRPTTEHTIPTMMTASPYHQGINDPAADQKTYQMEGALAVKQPKHIQVDTKPFKEEVKHPSKLPISPATESFTHIDSYSLNDYFLSRGFANIYVSGVGTAGSTGFMTSGDYQQIQSFKAVIDWLNGKVTAFTSHKRDKQVKADWSNGLVATTGKSYLGTMSTGLATTGVEGLKVIIAEAAISTWYDYYRENGLVCSPGGYPGEDLDVLTELTYSRNLLAGDYIKNNDCYQALLNEQSKAIDRQSGDYNQYWHDRNYLTHVNNVKSRVVYTHGLQDWNVKPRHVYKIFNALPQTIKKHLFLHQGQHVYMHNWQSIDFRESMNALLSQELLGIDNHFQLEEVIWQDNTTEQTWQVLDAFGGNHQEQIGLGDSKKLIDNHYDKEAFDTYCKDFNVFKNDLFKGNNKTNQITINLPLKKNYLLNGQCKLHLRVKTSDKKAILSAQILDYGPKKRFKDTPTIKFLNSLDNGKNFAREALRELPFTKDHYRVISKGVLNLQNRTDLLTIEAIDPEQWFDIEFSLQPSIYQLSKGDNLRIILYTTDFEHTIRDNASYSITVDLSQSYLTIPTNQGN.

Catalysis depends on charge relay system residues Ser347, Asp467, and His497.

Belongs to the peptidase S15 family. As to quaternary structure, homodimer.

Its subcellular location is the cytoplasm. It catalyses the reaction Hydrolyzes Xaa-Pro-|- bonds to release unblocked, N-terminal dipeptides from substrates including Ala-Pro-|-p-nitroanilide and (sequentially) Tyr-Pro-|-Phe-Pro-|-Gly-Pro-|-Ile.. Its function is as follows. Removes N-terminal dipeptides sequentially from polypeptides having unsubstituted N-termini provided that the penultimate residue is proline. This Streptococcus agalactiae serotype Ia (strain ATCC 27591 / A909 / CDC SS700) protein is Xaa-Pro dipeptidyl-peptidase.